The primary structure comprises 72 residues: MGKQPVKLKAVVYALSPFQQKIMTGLWKDLPEKIHHKVSENWISATLLVTPVVGTYWYAQYFKEQEKLEHRF.

Topologically, residues 1–41 (MGKQPVKLKAVVYALSPFQQKIMTGLWKDLPEKIHHKVSEN) are mitochondrial matrix. The helical transmembrane segment at 42–58 (WISATLLVTPVVGTYWY) threads the bilayer. Residues 59–72 (AQYFKEQEKLEHRF) are Mitochondrial intermembrane-facing.

Belongs to the UQCRQ/QCR8 family. In terms of assembly, component of the ubiquinol-cytochrome c oxidoreductase (cytochrome b-c1 complex, complex III, CIII), a multisubunit enzyme composed of 10 subunits. The complex is composed of 3 respiratory subunits cytochrome b (MT-CYB), cytochrome c1 (CYC1-1 or CYC1-2) and Rieske protein (UCR1-1 or UCR1-2), 2 core protein subunits MPPalpha1 (or MPPalpha2) and MPPB, and 5 low-molecular weight protein subunits QCR7-1 (or QCR7-2), UCRQ-1 (or UCRQ-2), QCR9, UCRY and probably QCR6-1 (or QCR6-2). The complex exists as an obligatory dimer and forms supercomplexes (SCs) in the inner mitochondrial membrane with NADH-ubiquinone oxidoreductase (complex I, CI), resulting in different assemblies (supercomplexes SCI(1)III(2) and SCI(2)III(4)).

It localises to the mitochondrion inner membrane. In terms of biological role, component of the ubiquinol-cytochrome c oxidoreductase, a multisubunit transmembrane complex that is part of the mitochondrial electron transport chain which drives oxidative phosphorylation. The respiratory chain contains 3 multisubunit complexes succinate dehydrogenase (complex II, CII), ubiquinol-cytochrome c oxidoreductase (cytochrome b-c1 complex, complex III, CIII) and cytochrome c oxidase (complex IV, CIV), that cooperate to transfer electrons derived from NADH and succinate to molecular oxygen, creating an electrochemical gradient over the inner membrane that drives transmembrane transport and the ATP synthase. The cytochrome b-c1 complex catalyzes electron transfer from ubiquinol to cytochrome c, linking this redox reaction to translocation of protons across the mitochondrial inner membrane, with protons being carried across the membrane as hydrogens on the quinol. In the process called Q cycle, 2 protons are consumed from the matrix, 4 protons are released into the intermembrane space and 2 electrons are passed to cytochrome c. This Arabidopsis thaliana (Mouse-ear cress) protein is Cytochrome b-c1 complex subunit 8-1, mitochondrial (UCRQ-1).